A 31-amino-acid chain; its full sequence is Photosystem II reaction center protein T (31 aa).

Residues 3 to 23 (ALVYTFLLIGTLGIIFFAIFF) form a helical membrane-spanning segment.

This sequence belongs to the PsbT family. In terms of assembly, PSII is composed of 1 copy each of membrane proteins PsbA, PsbB, PsbC, PsbD, PsbE, PsbF, PsbH, PsbI, PsbJ, PsbK, PsbL, PsbM, PsbT, PsbY, PsbZ, Psb30/Ycf12, at least 3 peripheral proteins of the oxygen-evolving complex and a large number of cofactors. It forms dimeric complexes.

It localises to the plastid. It is found in the chloroplast thylakoid membrane. In terms of biological role, found at the monomer-monomer interface of the photosystem II (PS II) dimer, plays a role in assembly and dimerization of PSII. PSII is a light-driven water plastoquinone oxidoreductase, using light energy to abstract electrons from H(2)O, generating a proton gradient subsequently used for ATP formation. In Tetradesmus obliquus (Green alga), this protein is Photosystem II reaction center protein T.